A 398-amino-acid polypeptide reads, in one-letter code: Cell adhesion molecule 3 (398 aa).

The N-terminal stretch at 1 to 24 (MGAPAASLLLLLLLFACCWAPGGA) is a signal peptide. In terms of domain architecture, Ig-like V-type spans 25–126 (NLSQDDSQPW…VRTAKSLVTV (102 aa)). The Extracellular portion of the chain corresponds to 25–330 (NLSQDDSQPW…PVPSSSSTYH (306 aa)). 3 cysteine pairs are disulfide-bonded: Cys50/Cys110, Cys152/Cys209, and Cys254/Cys299. Ig-like C2-type domains follow at residues 130–228 (PQKP…QRIE) and 233–315 (PTAM…YTLN). Asn290 carries N-linked (GlcNAc...) asparagine glycosylation. A helical membrane pass occupies residues 331 to 351 (AIIGGIVAFIVFLLLIMLIFL). The Cytoplasmic portion of the chain corresponds to 352–398 (GHYLIRHKGTYLTHEAKGSDDAPDADTAIINAEGGQSGGDDKKEYFI). Positions 367–398 (AKGSDDAPDADTAIINAEGGQSGGDDKKEYFI) are disordered. Position 388 is a phosphoserine (Ser388).

It belongs to the nectin family. Homodimer. Can form trans-heterodimers with NECTIN3. Interacts with EPB41L1, DLG3, PALS2 and CASK. As to expression, isoform 1 is expressed mainly in adult and fetal brain. Isoform 2 is highly expressed in adult brain and weakly expressed in placenta. In brain, Isoform 2 is highly expressed in cerebellum.

It is found in the cell membrane. It localises to the cell junction. Involved in cell-cell adhesion. Has both calcium-independent homophilic cell-cell adhesion activity and calcium-independent heterophilic cell-cell adhesion activity with IGSF4, NECTIN1 and NECTIN3. Interaction with EPB41L1 may regulate structure or function of cell-cell junctions. This is Cell adhesion molecule 3 (CADM3) from Homo sapiens (Human).